A 391-amino-acid chain; its full sequence is Elongation factor Tu (391 aa).

The tr-type G domain occupies 10-201 (KPHVNIGTIG…AVDEYIPTPA (192 aa)). Residues 19 to 26 (GHVDHGKT) are G1. 19 to 26 (GHVDHGKT) lines the GTP pocket. Mg(2+) is bound at residue Thr26. The tract at residues 55–59 (GITIS) is G2. Residues 76–79 (DCPG) are G3. GTP-binding positions include 76-80 (DCPGH) and 131-134 (NKVD). Residues 131 to 134 (NKVD) form a G4 region. The segment at 169 to 171 (SAL) is G5.

The protein belongs to the TRAFAC class translation factor GTPase superfamily. Classic translation factor GTPase family. EF-Tu/EF-1A subfamily. Monomer.

Its subcellular location is the cytoplasm. It catalyses the reaction GTP + H2O = GDP + phosphate + H(+). GTP hydrolase that promotes the GTP-dependent binding of aminoacyl-tRNA to the A-site of ribosomes during protein biosynthesis. The sequence is that of Elongation factor Tu from Cereibacter sphaeroides (strain ATCC 17025 / ATH 2.4.3) (Rhodobacter sphaeroides).